Consider the following 403-residue polypeptide: Phosphoglycerate kinase (403 aa).

Residues Asp21 to Asn23, Arg36, His59 to Arg62, Arg119, and Arg159 contribute to the substrate site. ATP contacts are provided by residues Lys214, Gly301, Glu332, and Gly359 to Ser362.

Belongs to the phosphoglycerate kinase family. Monomer.

Its subcellular location is the cytoplasm. It catalyses the reaction (2R)-3-phosphoglycerate + ATP = (2R)-3-phospho-glyceroyl phosphate + ADP. It participates in carbohydrate degradation; glycolysis; pyruvate from D-glyceraldehyde 3-phosphate: step 2/5. In Lactobacillus acidophilus (strain ATCC 700396 / NCK56 / N2 / NCFM), this protein is Phosphoglycerate kinase.